The chain runs to 59 residues: Dybowskin-1CDYa (59 aa).

The first 22 residues, 1–22 (MFTLKKSLLLLFFLGTINFSLC), serve as a signal peptide directing secretion. Positions 23 to 44 (EEERNAEEERRDYPEERDVEVE) are excised as a propeptide.

Belongs to the frog skin active peptide (FSAP) family. Brevinin subfamily. In terms of tissue distribution, expressed by the skin glands.

The protein localises to the secreted. Its function is as follows. Antimicrobial peptide. Has activity against the Gram-positive bacterium S.aureus (MIC=6 uM) and the Gram-negative bacterium E.coli (MIC=3 uM). Lacks hemolytic activity against human erythrocytes. The polypeptide is Dybowskin-1CDYa (Rana dybowskii (Dybovsky's frog)).